We begin with the raw amino-acid sequence, 272 residues long: Dermonecrotic toxin LvSicTox-alphaIC1bv (272 aa).

Residue His-5 is part of the active site. Mg(2+)-binding residues include Glu-25 and Asp-27. His-41 functions as the Nucleophile in the catalytic mechanism. Cystine bridges form between Cys-45/Cys-51 and Cys-47/Cys-189. Residue Asp-84 coordinates Mg(2+).

It belongs to the arthropod phospholipase D family. Class II subfamily. The cofactor is Mg(2+). In terms of tissue distribution, expressed by the venom gland.

The protein resides in the secreted. It catalyses the reaction an N-(acyl)-sphingosylphosphocholine = an N-(acyl)-sphingosyl-1,3-cyclic phosphate + choline. It carries out the reaction an N-(acyl)-sphingosylphosphoethanolamine = an N-(acyl)-sphingosyl-1,3-cyclic phosphate + ethanolamine. The enzyme catalyses a 1-acyl-sn-glycero-3-phosphocholine = a 1-acyl-sn-glycero-2,3-cyclic phosphate + choline. The catalysed reaction is a 1-acyl-sn-glycero-3-phosphoethanolamine = a 1-acyl-sn-glycero-2,3-cyclic phosphate + ethanolamine. Functionally, dermonecrotic toxins cleave the phosphodiester linkage between the phosphate and headgroup of certain phospholipids (sphingolipid and lysolipid substrates), forming an alcohol (often choline) and a cyclic phosphate. This toxin acts on sphingomyelin (SM). It may also act on ceramide phosphoethanolamine (CPE), lysophosphatidylcholine (LPC) and lysophosphatidylethanolamine (LPE), but not on lysophosphatidylserine (LPS), and lysophosphatidylglycerol (LPG). It acts by transphosphatidylation, releasing exclusively cyclic phosphate products as second products. Induces dermonecrosis, hemolysis, increased vascular permeability, edema, inflammatory response, and platelet aggregation. In Loxosceles variegata (Recluse spider), this protein is Dermonecrotic toxin LvSicTox-alphaIC1bv.